A 102-amino-acid chain; its full sequence is MQEKIRIKLKAFDHKVLDQSVKQIVDTVKRGGGLVKGPIPLPTRRRVWCVHRSPHKFEQSREHFEMRIHKRLIEIENATPQTIEALMDISLPAGVEVEIKLS.

This sequence belongs to the universal ribosomal protein uS10 family. In terms of assembly, part of the 30S ribosomal subunit.

Involved in the binding of tRNA to the ribosomes. This is Small ribosomal subunit protein uS10 from Sulfurihydrogenibium sp. (strain YO3AOP1).